Consider the following 896-residue polypeptide: Zinc finger protein 574 (896 aa).

3 C2H2-type zinc fingers span residues 16–38, 76–98, and 126–148; these read YVCSECNQLYGSLEEVLMHQNSH, YQCLECGQLLMSPSQLLEHQELH, and YECVDCKALFASQELWLNHRQTH. At serine 164 the chain carries Phosphoserine. The C2H2-type 4 zinc finger occupies 214–236; it reads YKCSECSQLFQLPADFLEHQATH. The tract at residues 239–301 is disordered; the sequence is APVPESQEPA…RARRNNSGEA (63 aa). Polar residues predominate over residues 247–257; the sequence is PALQQEVQASS. Basic and acidic residues predominate over residues 274–287; sequence HSYELRNGEAIGRD. Serine 298 is modified (phosphoserine). 4 consecutive C2H2-type zinc fingers follow at residues 309-331, 336-358, 364-386, and 392-413; these read LFCSACDQLFLSPHQLQQHLRSH, FKCPLCSRVFPSPSSLDQHLGDH, FLCVDCGLAFGTEALLLAHRRAH, and HSCPCGKTFVNLTKFLYHRRTH. Residues 434 to 460 form a disordered region; sequence FPEPAPAETGEPEAPEPPVSEETSAGP. 6 consecutive C2H2-type zinc fingers follow at residues 466-489, 495-517, 523-545, 551-573, 579-601, and 607-630; these read YRCLLCSREFGKALQLTRHQRFVH, HKCSICGKMFKKKSHVRNHLRTH, FPCPDCSKPFNSPANLARHRLTH, YRCGDCGKAFTQSSTLRQHRLVH, YRCQECGVRFHRPYRLLMHRYHH, and YKCRECPRSFLLRRLLEVHQLVVH. Residues 636–659 form a C2H2-type 15; degenerate zinc finger; sequence HRCPSCGAAFPSSLRLREHRCAAA. The C2H2-type 16 zinc finger occupies 667 to 689; sequence FECGTCGKKVGSAARLQAHEAAH. The disordered stretch occupies residues 687–733; the sequence is AAHAAAGPGEVLAKEPPAPRAPRATRAPVASPAGLGGTATASPAAPA. The segment covering 707–732 has biased composition (low complexity); that stretch reads APRATRAPVASPAGLGGTATASPAAP. The residue at position 717 (serine 717) is a Phosphoserine. Threonine 724 carries the post-translational modification Phosphothreonine. Residue serine 728 is modified to Phosphoserine. 4 C2H2-type zinc fingers span residues 738-760, 766-788, 794-816, and 822-844; these read LECSECKKLFSTETSLQVHRRIH, YPCPDCGKAFRQSTHLKDHRRLH, FACEVCGKAFAISMRLAEHRRIH, and YSCPDCGKSYRSFSNLWKHRKTH. At arginine 832 the chain carries Asymmetric dimethylarginine.

This sequence belongs to the krueppel C2H2-type zinc-finger protein family.

It localises to the nucleus. Functionally, may be involved in transcriptional regulation. This Macaca fascicularis (Crab-eating macaque) protein is Zinc finger protein 574 (ZNF574).